The primary structure comprises 294 residues: HTH-type transcriptional regulator XapR (294 aa).

One can recognise an HTH lysR-type domain in the interval 7–64 (TDLKLLRYFLAVAEELHFGRAAARLNMSQPPLSIHIKELENQLGTQLFIRHSRSVVLT). The H-T-H motif DNA-binding region spans 24 to 43 (FGRAAARLNMSQPPLSIHIK).

The protein belongs to the LysR transcriptional regulatory family.

Its function is as follows. Positive regulator required for the expression of xapA and xapB. Binds to the inducer xanthosine. This chain is HTH-type transcriptional regulator XapR (xapR), found in Escherichia coli (strain K12).